The following is a 162-amino-acid chain: Phosphopantetheine adenylyltransferase (162 aa).

Thr-10 provides a ligand contact to substrate. ATP-binding positions include 10–11 (TF) and His-18. Positions 42, 74, and 88 each coordinate substrate. ATP is bound by residues 89-91 (GLR), Glu-99, and 124-130 (NSFISST).

Belongs to the bacterial CoaD family. As to quaternary structure, homohexamer. Requires Mg(2+) as cofactor.

The protein resides in the cytoplasm. It carries out the reaction (R)-4'-phosphopantetheine + ATP + H(+) = 3'-dephospho-CoA + diphosphate. Its pathway is cofactor biosynthesis; coenzyme A biosynthesis; CoA from (R)-pantothenate: step 4/5. In terms of biological role, reversibly transfers an adenylyl group from ATP to 4'-phosphopantetheine, yielding dephospho-CoA (dPCoA) and pyrophosphate. This chain is Phosphopantetheine adenylyltransferase, found in Alteromonas mediterranea (strain DSM 17117 / CIP 110805 / LMG 28347 / Deep ecotype).